Here is a 205-residue protein sequence, read N- to C-terminus: uncharacterized protein (205 aa).

The chain crosses the membrane as a helical span at residues 5-27 (IIVLFIIHFIMINENVFIALLHY).

It to T.maritima TM1570.

It is found in the membrane. This is an uncharacterized protein from Aquifex aeolicus (strain VF5).